We begin with the raw amino-acid sequence, 195 residues long: Probable DNA-directed RNA polymerase subunit delta (195 aa).

The HTH HARE-type domain occupies 14 to 81 (LSMIEVAHAI…GDNTWGLRAW (68 aa)). Residues 91 to 195 (TVGETEDEED…DEEDKEDDEE (105 aa)) form a disordered region. 2 stretches are compositionally biased toward acidic residues: residues 116 to 171 (TDDD…EDQL) and 179 to 195 (FGDD…DDEE).

Belongs to the RpoE family. As to quaternary structure, RNAP is composed of a core of 2 alpha, a beta and a beta' subunits. The core is associated with a delta subunit and one of several sigma factors.

In terms of biological role, participates in both the initiation and recycling phases of transcription. In the presence of the delta subunit, RNAP displays an increased specificity of transcription, a decreased affinity for nucleic acids, and an increased efficiency of RNA synthesis because of enhanced recycling. The polypeptide is Probable DNA-directed RNA polymerase subunit delta (Limosilactobacillus fermentum (strain NBRC 3956 / LMG 18251) (Lactobacillus fermentum)).